Reading from the N-terminus, the 541-residue chain is Atrial natriuretic peptide receptor 3 (541 aa).

Residues 1–26 form the signal peptide; that stretch reads MPSLLVLTFSPCVLLGWALLAGGTGG. The Extracellular segment spans residues 27-481; that stretch reads GGVGGGGGGA…PCKSSGGLEE (455 aa). Asn-86 carries N-linked (GlcNAc...) (complex) asparagine glycosylation. Chloride-binding residues include Ser-106, Val-135, and Cys-136. 2 cysteine pairs are disulfide-bonded: Cys-108-Cys-136 and Cys-213-Cys-261. Residue Asn-293 is glycosylated (N-linked (GlcNAc...) (high mannose) asparagine). Asn-394 is a glycosylation site (N-linked (GlcNAc...) (complex) asparagine). A helical transmembrane segment spans residues 482–504; sequence SAVTGIVVGALLGAGLLMAFYFF. Topologically, residues 505–541 are cytoplasmic; it reads RKKYRITIERRTQQEESNLGKHRELREDSIRSHFSVA.

It belongs to the ANF receptor family. As to quaternary structure, homodimer; disulfide-linked. Dimers can also be formed through the C-terminal cysteine of isoform 2. Interacts with OSTN.

It is found in the cell membrane. Functionally, receptor for the natriuretic peptide hormones, binding with similar affinities atrial natriuretic peptide NPPA/ANP, brain natriuretic peptide NPPB/BNP, and C-type natriuretic peptide NPPC/CNP. May function as a clearance receptor for NPPA, NPPB and NPPC, regulating their local concentrations and effects. Acts as a regulator of osteoblast differentiation and bone growth by binding to its ligand osteocrin, thereby preventing binding between NPR3/NPR-C and natriuretic peptides, leading to increase cGMP production. The chain is Atrial natriuretic peptide receptor 3 (NPR3) from Homo sapiens (Human).